A 504-amino-acid polypeptide reads, in one-letter code: Flavin-dependent halogenase armH3 (504 aa).

FAD-binding residues include Gly-16, Ala-19, Glu-49, and Ala-149. Residues Ser-329 and Gly-330 each coordinate chloride. An FAD-binding site is contributed by Ile-331. The interval 444–475 is disordered; sequence NNLRTPVDTGAADVKAKHAPSETDAQNPLQSM.

The protein belongs to the flavin-dependent halogenase family.

It catalyses the reaction melleolide F + FADH2 + chloride + O2 = 6'-chloromelleolide F + FAD + 2 H2O + H(+). Flavin-dependent halogenase involved in the biosynthesis of melleolides, a range of antifungal and phytotoxic polyketide derivatives composed of an orsellinic acid (OA) moiety esterified to various sesquiterpene alcohols. The halogenase catalyzes the transfer of a single chlorine atom to the melleolide backbone, resulting in a 6'-chloromelleolide product. The enzyme acts on free substrate and does not depend on carrier-protein-dependent acceptor molecules. The sequence is that of Flavin-dependent halogenase armH3 from Armillaria mellea (Honey mushroom).